The following is a 425-amino-acid chain: UBX domain-containing protein 4 (425 aa).

A disordered region spans residues 224–257 (TPIPSLPSTPSSYQNLPSQSLTGESLPTVSNQEK). A compositionally biased stretch (polar residues) spans 236–254 (YQNLPSQSLTGESLPTVSN). Phosphoserine is present on Ser338. A UBX domain is found at 341–390 (PLPSSAIVKFDFGNGKSIVHEFSKDDNIETLRAFVASHLSPEESTSFQLT).

It is found in the cytoplasm. The protein resides in the nucleus. Its function is as follows. Involved in CDC48-dependent protein degradation through the ubiquitin/proteasome pathway. The chain is UBX domain-containing protein 4 (ubx4) from Schizosaccharomyces pombe (strain 972 / ATCC 24843) (Fission yeast).